A 378-amino-acid polypeptide reads, in one-letter code: MKRLFAWGAPLFALVALTLSLFSQADTKPSTIDSTSANYQQATLAGGCFWCTESDMEKLPGVVDVISGYAGGDVDNPTYKQVSSGKTGHIEVIQVTFDPKIVTYEQVLDNFFRHIDPTDDQGSFVDRGEQYRPAIFYHNAEQLEVAKRFMMEIDQLGIFKKPLKTELIEFKKFWPAEDYHQDYYKKNKVRYNYYRYASGRDQYLDEIFGADRNTHPKTLRQWIDEKNGQANVKAYVRPSDEQIRAKLTSLQYKVTQRDGTERPFDNEYWDNKEEGIYVDIVSGEPLFSSTDKYDSKTGWPSFTQPLNSSYIVTKDDNSLFYTRTEVRSRFADSHLGHVFNDGPAPTGLRYCMNSAAMRFIPKQEMAAQGYGEYLALFK.

The peptide methionine sulfoxide reductase A stretch occupies residues 40–197 (QQATLAGGCF…KVRYNYYRYA (158 aa)). C48 is a catalytic residue. In terms of domain architecture, MsrB spans 240–362 (DEQIRAKLTS…NSAAMRFIPK (123 aa)). The active-site Nucleophile is C351.

It in the N-terminal section; belongs to the MsrA Met sulfoxide reductase family. In the C-terminal section; belongs to the MsrB Met sulfoxide reductase family.

The catalysed reaction is L-methionyl-[protein] + [thioredoxin]-disulfide + H2O = L-methionyl-(S)-S-oxide-[protein] + [thioredoxin]-dithiol. It carries out the reaction [thioredoxin]-disulfide + L-methionine + H2O = L-methionine (S)-S-oxide + [thioredoxin]-dithiol. The enzyme catalyses L-methionyl-[protein] + [thioredoxin]-disulfide + H2O = L-methionyl-(R)-S-oxide-[protein] + [thioredoxin]-dithiol. Functionally, has an important function as a repair enzyme for proteins that have been inactivated by oxidation. Catalyzes the reversible oxidation-reduction of methionine sulfoxide in proteins to methionine. The chain is Peptide methionine sulfoxide reductase MsrA/MsrB (msrAB) from Vibrio cholerae serotype O1 (strain ATCC 39315 / El Tor Inaba N16961).